The following is a 556-amino-acid chain: Phosphoacetylglucosamine mutase (556 aa).

Catalysis depends on serine 68, which acts as the Phosphoserine intermediate. Positions 68, 286, 288, and 290 each coordinate Mg(2+). Serine 68 carries the phosphoserine modification. Substrate is bound by residues 386–388 (EAN), 518–522 (RPSGT), and arginine 527.

This sequence belongs to the phosphohexose mutase family. The cofactor is Mg(2+).

It catalyses the reaction N-acetyl-alpha-D-glucosamine 1-phosphate = N-acetyl-D-glucosamine 6-phosphate. The protein operates within nucleotide-sugar biosynthesis; UDP-N-acetyl-alpha-D-glucosamine biosynthesis; N-acetyl-alpha-D-glucosamine 1-phosphate from alpha-D-glucosamine 6-phosphate (route I): step 2/2. Functionally, interconverts GlcNAc-6-P and GlcNAc-1-P. The polypeptide is Phosphoacetylglucosamine mutase (DRT101) (Arabidopsis thaliana (Mouse-ear cress)).